The chain runs to 253 residues: Triosephosphate isomerase, cytosolic (253 aa).

The substrate site is built by N10 and K12. H96 acts as the Electrophile in catalysis. The active-site Proton acceptor is the E166.

The protein belongs to the triosephosphate isomerase family. In terms of assembly, homodimer.

The protein resides in the cytoplasm. The catalysed reaction is D-glyceraldehyde 3-phosphate = dihydroxyacetone phosphate. The protein operates within carbohydrate biosynthesis; gluconeogenesis. It participates in carbohydrate degradation; glycolysis; D-glyceraldehyde 3-phosphate from glycerone phosphate: step 1/1. This is Triosephosphate isomerase, cytosolic from Secale cereale (Rye).